A 346-amino-acid polypeptide reads, in one-letter code: Phosphoribosylformylglycinamidine cyclo-ligase (346 aa).

The protein belongs to the AIR synthase family.

The protein localises to the cytoplasm. It carries out the reaction 2-formamido-N(1)-(5-O-phospho-beta-D-ribosyl)acetamidine + ATP = 5-amino-1-(5-phospho-beta-D-ribosyl)imidazole + ADP + phosphate + H(+). It participates in purine metabolism; IMP biosynthesis via de novo pathway; 5-amino-1-(5-phospho-D-ribosyl)imidazole from N(2)-formyl-N(1)-(5-phospho-D-ribosyl)glycinamide: step 2/2. The sequence is that of Phosphoribosylformylglycinamidine cyclo-ligase from Prochlorococcus marinus (strain NATL1A).